A 970-amino-acid chain; its full sequence is Type III restriction-modification enzyme EcoPI Res subunit (970 aa).

Positions 75–540 are helicase-like domain; sequence ARSNVIDVSM…EVGRGLRLPV (466 aa). Residues 894 to 918 form an endonuclease domain region; it reads TYSPDFAYVVKTAEGDYLNFIIETK.

This sequence belongs to the type III restriction-modification system Res protein family. As to quaternary structure, a heterotetramer with stoichiometry Res(2)Mod(2). Mg(2+) serves as cofactor. It depends on S-adenosyl-L-methionine as a cofactor.

The catalysed reaction is Endonucleolytic cleavage of DNA to give specific double-stranded fragments with terminal 5'-phosphates.. In terms of biological role, a type III restriction enzyme that recognizes 2 inversely oriented double-stranded sequences 5'-AGACC-3' and cleaves DNA 25-27 base pairs downstream of one site, producing a single-strand 5' protrusion of two nucleotides. DNA restriction requires both the Res and Mod subunits. DNA topology affects its action; relaxed and negatively supercoiled DNA are digested but positively supercoiled DNA is not a good substrate. After binding to one recognition site undergoes random one-dimensional diffusion along DNA until it collides with a stationary enzyme bound to the second DNA site, which is when DNA cleavage occurs. This Enterobacteriaceae (Bacteriophage P1) protein is Type III restriction-modification enzyme EcoPI Res subunit.